Consider the following 250-residue polypeptide: Pre-protein VI (250 aa).

Positions M1–G33 are excised as a propeptide. The segment at A34 to Y54 is amphipathic alpha-helix essential for membrane lytic activity. The segment at S36 to N53 is involved in endosomal membrane lysis. An interaction with hexon protein region spans residues G48 to Q74. Residues L67–F76 carry the Nuclear export signal motif. A disordered region spans residues I103–P148. Position 124 is a phosphoserine; by host (S124). Basic and acidic residues predominate over residues G127–T140. Residues K131–P135 carry the Nuclear localization signal motif. T143 is modified (phosphothreonine; by host). The PPXY motif motif lies at P148 to Y151. A Nuclear export signal motif is present at residues S231–Q242. The segment at L233–L239 is interaction with hexon protein. The binds to importin alpha/beta, involved in hexon nuclear import stretch occupies residues G240–F250. The Nuclear localization signal motif lies at K245–R248.

The protein belongs to the adenoviridae protein VI family. Interacts with hexon protein; this interaction allows nuclear import of hexon trimers and possibly pre-capsid assembly. Interacts (via C-terminal NLS) with importin alpha/beta. In terms of assembly, interacts (via PPxY motif) with host NEDD4 ubiquitine ligase; this interaction might play a role in virus intracellular transport during entry. Part of a complex composed of the core-capsid bridging protein, the endosome lysis protein VI and the hexon-linking protein VIII; these interactions bridge the virus core to the capsid. Interacts with peripentonal hexons; this interaction stabilizes the capsid by gluing two peripentonal hexons together and joining them with an adjacent group-of-nine hexon. As to quaternary structure, heterodimer with the viral protease; disulfide-linked. Interacts with the viral protease. In terms of processing, ubiquitinated by Nedd4 following partial capsid disassembly; which might play a role in intracellular virus movement during entry. Post-translationally, contains the major nuclear import and export signals. Proteolytically removed during virion maturation. The processing of the C-terminus turns the precursor into a mature viral structural protein and abrogates its ability to promote hexon import and act as a potential chaperone protein.

It localises to the host nucleus. Its subcellular location is the host cytoplasm. It is found in the virion. Its function is as follows. During virus assembly, promotes hexon trimers nuclear import through nuclear pore complexes via an importin alpha/beta-dependent mechanism. By analogy to herpesviruses capsid assembly, might act as a chaperone to promote the formation of the icosahedral capsid. In terms of biological role, structural component of the virion that provides increased stability to the particle shell through its interaction with the core-capsid bridging protein and the hexon-linking protein VIII. Fibers shedding during virus entry into host cell allows the endosome lysis protein to be exposed as a membrane-lytic peptide. Exhibits pH-independent membrane fragmentation activity and probably mediates viral rapid escape from host endosome via organellar membrane lysis. It is not clear if it then remains partially associated with the capsid and involved in the intracellular microtubule-dependent transport of capsid to the nucleus, or if it is lost during endosomal penetration. Functionally, cofactor that activates the viral protease. Binds to viral protease in a 1:1 ratio. This Homo sapiens (Human) protein is Pre-protein VI.